The primary structure comprises 48 residues: ATP synthase protein 8 (48 aa).

The helical transmembrane segment at Leu-4 to Ile-24 threads the bilayer.

This sequence belongs to the ATPase protein 8 family. In terms of assembly, F-type ATPases have 2 components, CF(1) - the catalytic core - and CF(0) - the membrane proton channel.

The protein resides in the mitochondrion membrane. Functionally, mitochondrial membrane ATP synthase (F(1)F(0) ATP synthase or Complex V) produces ATP from ADP in the presence of a proton gradient across the membrane which is generated by electron transport complexes of the respiratory chain. F-type ATPases consist of two structural domains, F(1) - containing the extramembraneous catalytic core and F(0) - containing the membrane proton channel, linked together by a central stalk and a peripheral stalk. During catalysis, ATP synthesis in the catalytic domain of F(1) is coupled via a rotary mechanism of the central stalk subunits to proton translocation. Part of the complex F(0) domain. Minor subunit located with subunit a in the membrane. The sequence is that of ATP synthase protein 8 (atp8) from Emericella nidulans (Aspergillus nidulans).